Here is a 115-residue protein sequence, read N- to C-terminus: Glutaredoxin 4 (115 aa).

The Glutaredoxin domain maps to 5-107; that stretch reads IEKIQRQIAE…QLIKETAAKY (103 aa). K22 is a binding site for glutathione. C30 contributes to the [2Fe-2S] cluster binding site. Residues R59, F71, and 84-85 contribute to the glutathione site; that span reads CD.

This sequence belongs to the glutaredoxin family. Monothiol subfamily. Homodimer.

Its subcellular location is the cytoplasm. Functionally, monothiol glutaredoxin involved in the biogenesis of iron-sulfur clusters. The polypeptide is Glutaredoxin 4 (grxD) (Shigella flexneri).